The chain runs to 674 residues: Protein asunder (674 aa).

A coiled-coil region spans residues 516–538 (HKAKDQYRLLYRELEQLIQLNAS). The Nuclear localization signal (NLS) signature appears at 601–607 (LKASKRR).

Belongs to the Integrator subunit 13 family. In terms of assembly, belongs to the multiprotein complex Integrator, at least composed of IntS1, IntS2, IntS3, IntS4, omd/IntS5, IntS6, defl/IntS7, IntS8, IntS9, IntS10, IntS11, IntS12, asun/IntS13, IntS14 and IntS15. The core complex associates with protein phosphatase 2A subunits mts/PP2A and Pp2A-29B, to form the Integrator-PP2A (INTAC) complex. Phosphorylated.

The protein localises to the nucleus. It is found in the cytoplasm. Its subcellular location is the perinuclear region. In terms of biological role, component of the integrator complex, a multiprotein complex that terminates RNA polymerase II (Pol II) transcription in the promoter-proximal region of genes. The integrator complex provides a quality checkpoint during transcription elongation by driving premature transcription termination of transcripts that are unfavorably configured for transcriptional elongation: the complex terminates transcription by (1) catalyzing dephosphorylation of the C-terminal domain (CTD) of Pol II subunit Polr2A/Rbp1 and Spt5, and (2) degrading the exiting nascent RNA transcript via endonuclease activity. The integrator complex is also involved in the 3'-end processing of the U7 snRNA, and also the spliceosomal snRNAs U1, U2, U4 and U5. This Drosophila persimilis (Fruit fly) protein is Protein asunder (asun).